A 184-amino-acid polypeptide reads, in one-letter code: Ribosome-recycling factor (184 aa).

The tract at residues 137–158 (DSIKAKQKDGIPEDEAKRGQDE) is disordered.

This sequence belongs to the RRF family.

It localises to the cytoplasm. In terms of biological role, responsible for the release of ribosomes from messenger RNA at the termination of protein biosynthesis. May increase the efficiency of translation by recycling ribosomes from one round of translation to another. The sequence is that of Ribosome-recycling factor from Desulforamulus reducens (strain ATCC BAA-1160 / DSM 100696 / MI-1) (Desulfotomaculum reducens).